Reading from the N-terminus, the 224-residue chain is Small ribosomal subunit protein uS3 (224 aa).

Residues 38 to 106 form the KH type-2 domain; the sequence is LREFVKEKLG…EVYLNVVEVR (69 aa).

This sequence belongs to the universal ribosomal protein uS3 family. Part of the 30S ribosomal subunit. Forms a tight complex with proteins S10 and S14.

In terms of biological role, binds the lower part of the 30S subunit head. Binds mRNA in the 70S ribosome, positioning it for translation. This is Small ribosomal subunit protein uS3 from Anaeromyxobacter dehalogenans (strain 2CP-C).